The following is a 167-amino-acid chain: Photosystem I assembly protein Ycf3 (167 aa).

3 TPR repeats span residues 35-68, 72-105, and 120-153; these read AFSY…EEDP, SFIL…NNKL, and AVKA…APSN.

The protein belongs to the Ycf3 family.

It localises to the plastid. It is found in the chloroplast thylakoid membrane. Its function is as follows. Essential for the assembly of the photosystem I (PSI) complex. May act as a chaperone-like factor to guide the assembly of the PSI subunits. This chain is Photosystem I assembly protein Ycf3, found in Galdieria sulphuraria (Red alga).